The sequence spans 360 residues: Phenylalanine--tRNA ligase alpha subunit (360 aa).

Position 260 (Glu260) interacts with Mg(2+).

The protein belongs to the class-II aminoacyl-tRNA synthetase family. Phe-tRNA synthetase alpha subunit type 1 subfamily. Tetramer of two alpha and two beta subunits. Requires Mg(2+) as cofactor.

The protein resides in the cytoplasm. It catalyses the reaction tRNA(Phe) + L-phenylalanine + ATP = L-phenylalanyl-tRNA(Phe) + AMP + diphosphate + H(+). The protein is Phenylalanine--tRNA ligase alpha subunit of Agrobacterium fabrum (strain C58 / ATCC 33970) (Agrobacterium tumefaciens (strain C58)).